Reading from the N-terminus, the 341-residue chain is Fe-S cluster assembly protein DRE2 (341 aa).

The interval 1 to 157 (MNTLLLLHPT…FKKLSSPPTL (157 aa)) is N-terminal SAM-like domain. The segment at 151–171 (LSSPPTLTDSSEADEDEESQL) is disordered. A linker region spans residues 157–204 (LTDSSEADEDEESQLNEKLKGSKLIYFDESSDDEIIDEDELLRDDDGA). The span at 161–170 (SEADEDEESQ) shows a compositional bias: acidic residues. [2Fe-2S] cluster-binding residues include cysteine 215, cysteine 227, cysteine 230, and cysteine 232. A fe-S binding site A region spans residues 215–232 (CALPNGKRRKKACKDCTC). Residues cysteine 304, cysteine 307, cysteine 315, and cysteine 318 each coordinate [4Fe-4S] cluster. Short sequence motifs (cx2C motif) lie at residues 304–307 (CGSC) and 315–318 (CDGC). The tract at residues 304 to 318 (CGSCALGDAFRCDGC) is fe-S binding site B.

Belongs to the anamorsin family. As to quaternary structure, monomer. Interacts with TAH18. Interacts with MIA40. The cofactor is [2Fe-2S] cluster. [4Fe-4S] cluster serves as cofactor.

The protein localises to the cytoplasm. The protein resides in the mitochondrion intermembrane space. Component of the cytosolic iron-sulfur (Fe-S) protein assembly (CIA) machinery required for the maturation of extramitochondrial Fe-S proteins. Part of an electron transfer chain functioning in an early step of cytosolic Fe-S biogenesis, facilitating the de novo assembly of a [4Fe-4S] cluster on the scaffold complex CFD1-NBP35. Electrons are transferred to DRE2 from NADPH via the FAD- and FMN-containing protein TAH18. TAH18-DRE2 are also required for the assembly of the diferric tyrosyl radical cofactor of ribonucleotide reductase (RNR), probably by providing electrons for reduction during radical cofactor maturation in the catalytic small subunit RNR2. The polypeptide is Fe-S cluster assembly protein DRE2 (Komagataella phaffii (strain GS115 / ATCC 20864) (Yeast)).